A 551-amino-acid chain; its full sequence is Glucans biosynthesis protein D (551 aa).

The segment at residues 1-32 (MNRRRFIKGSMAMAAVCGSSGIASLFSQAAFA) is a signal peptide (tat-type signal).

This sequence belongs to the OpgD/OpgG family. Post-translationally, predicted to be exported by the Tat system. The position of the signal peptide cleavage has not been experimentally proven.

The protein localises to the periplasm. The protein operates within glycan metabolism; osmoregulated periplasmic glucan (OPG) biosynthesis. Probably involved in the control of the structural glucose backbone of osmoregulated periplasmic glucans (OPGs). In Salmonella paratyphi A (strain ATCC 9150 / SARB42), this protein is Glucans biosynthesis protein D.